A 333-amino-acid polypeptide reads, in one-letter code: Nuclear egress protein 1 (333 aa).

The segment at 45-64 is disordered; it reads SRRYKSVSRSGPSMRVRSRT. A CCCH-type zinc finger spans residues 128–251; the sequence is CLSLSGMGYH…YVIFPGKSVH (124 aa).

It belongs to the herpesviridae NEC1 protein family. Forms a heterohexameric complex with NEC2. Interacts with capsid vertex specific component 2/CVC2; this interaction directs the capsid to the host inner nuclear membrane to initiate budding. Post-translationally, phosphorylated at serine residues in the N-terminus. This phosphorylation regulates the localization within the inner nuclear membrane.

Its subcellular location is the host nucleus inner membrane. Functionally, plays an essential role in virion nuclear egress, the first step of virion release from infected cell. Within the host nucleus, NEC1 interacts with the newly formed capsid through the vertexes and directs it to the inner nuclear membrane by associating with NEC2. Induces the budding of the capsid at the inner nuclear membrane as well as its envelopment into the perinuclear space. There, the NEC1/NEC2 complex promotes the fusion of the enveloped capsid with the outer nuclear membrane and the subsequent release of the viral capsid into the cytoplasm where it will reach the secondary budding sites in the host Golgi or trans-Golgi network. The sequence is that of Nuclear egress protein 1 from Varicella-zoster virus (strain Dumas) (HHV-3).